The primary structure comprises 553 residues: 2-succinyl-5-enolpyruvyl-6-hydroxy-3-cyclohexene-1-carboxylate synthase (553 aa).

The protein belongs to the TPP enzyme family. MenD subfamily. In terms of assembly, homodimer. Requires Mg(2+) as cofactor. Mn(2+) serves as cofactor. Thiamine diphosphate is required as a cofactor.

The catalysed reaction is isochorismate + 2-oxoglutarate + H(+) = 5-enolpyruvoyl-6-hydroxy-2-succinyl-cyclohex-3-ene-1-carboxylate + CO2. It functions in the pathway quinol/quinone metabolism; 1,4-dihydroxy-2-naphthoate biosynthesis; 1,4-dihydroxy-2-naphthoate from chorismate: step 2/7. The protein operates within quinol/quinone metabolism; menaquinone biosynthesis. In terms of biological role, catalyzes the thiamine diphosphate-dependent decarboxylation of 2-oxoglutarate and the subsequent addition of the resulting succinic semialdehyde-thiamine pyrophosphate anion to isochorismate to yield 2-succinyl-5-enolpyruvyl-6-hydroxy-3-cyclohexene-1-carboxylate (SEPHCHC). In Thermobifida fusca (strain YX), this protein is 2-succinyl-5-enolpyruvyl-6-hydroxy-3-cyclohexene-1-carboxylate synthase.